Consider the following 419-residue polypeptide: Transcription termination factor Rho (419 aa).

A Rho RNA-BD domain is found at 48 to 123 (DIFGDGVLEI…LKVNKVNYDK (76 aa)). RNA-binding regions lie at residues 61–66 (GFGFLR), 78–80 (DIY), and 108–110 (ERY). ATP-binding positions include 169-174 (GRGQRG), 181-186 (KAGKTM), and Arg212. Residues 284–288 (VLTGG) are RNA-binding 2.

It belongs to the Rho family. Homohexamer. The homohexamer assembles into an open ring structure.

Functionally, facilitates transcription termination by a mechanism that involves Rho binding to the nascent RNA, activation of Rho's RNA-dependent ATPase activity, and release of the mRNA from the DNA template. This chain is Transcription termination factor Rho, found in Buchnera aphidicola subsp. Baizongia pistaciae (strain Bp).